The sequence spans 59 residues: Large ribosomal subunit protein uL30 (59 aa).

The protein belongs to the universal ribosomal protein uL30 family. In terms of assembly, part of the 50S ribosomal subunit.

This is Large ribosomal subunit protein uL30 from Buchnera aphidicola subsp. Schizaphis graminum (strain Sg).